We begin with the raw amino-acid sequence, 689 residues long: Methionine--tRNA ligase (689 aa).

A 'HIGH' region motif is present at residues 19–29 (PYPTGDLHIGH). Cys150, Cys153, Cys162, and Cys166 together coordinate Zn(2+). Residues 338-342 (GLSTS) carry the 'KMSKS' region motif. Thr341 provides a ligand contact to ATP. Residues 591–689 (EFQALDLRVG…EDSEPGTKVM (99 aa)) enclose the tRNA-binding domain.

It belongs to the class-I aminoacyl-tRNA synthetase family. MetG type 1 subfamily. In terms of assembly, homodimer. The cofactor is Zn(2+).

It is found in the cytoplasm. It catalyses the reaction tRNA(Met) + L-methionine + ATP = L-methionyl-tRNA(Met) + AMP + diphosphate. Its function is as follows. Is required not only for elongation of protein synthesis but also for the initiation of all mRNA translation through initiator tRNA(fMet) aminoacylation. The sequence is that of Methionine--tRNA ligase from Halobacterium salinarum (strain ATCC 700922 / JCM 11081 / NRC-1) (Halobacterium halobium).